The following is a 293-amino-acid chain: DDRGK domain-containing protein 1 (293 aa).

Topologically, residues 1-6 are lumenal; the sequence is MWGPLI. Residues 7-27 form a helical membrane-spanning segment; the sequence is YALLGLAIVAAAFLFVRRSQA. The Cytoplasmic segment spans residues 28–293; that stretch reads KEVVPVADDD…PADVDETTTA (266 aa). 2 disordered regions span residues 30–151 and 273–293; these read VVPV…RQKE and TDVE…TTTA. Composition is skewed to basic and acidic residues over residues 90–126 and 133–151; these read KLQE…KERE and ERQR…RQKE.

This sequence belongs to the DDRGK1 family.

The protein resides in the endoplasmic reticulum membrane. Functionally, substrate adapter for ufmylation, the covalent attachment of the ubiquitin-like modifier UFM1 to substrate proteins. The protein is DDRGK domain-containing protein 1 of Monosiga brevicollis (Choanoflagellate).